The chain runs to 890 residues: Wolframin (890 aa).

At M1 the chain carries N-acetylmethionine. A compositionally biased stretch (pro residues) spans 1-20; the sequence is MNSGTPPPSPSGPPPPPAPQ. Positions 1–83 are disordered; it reads MNSGTPPPSP…ETDRAGPMKA (83 aa). The segment at 1–323 is interaction with ATP6V1A; sequence MNSGTPPPSP…MHWLSTIVPT (323 aa). T30 is modified (phosphothreonine). Phosphoserine is present on S32. Residues 50-67 show a composition bias toward low complexity; it reads PSAGRSAGEAAAPEPRAP. A compositionally biased stretch (basic and acidic residues) spans 71 to 83; that stretch reads SREETDRAGPMKA. Phosphoserine is present on S158. A disordered region spans residues 208–227; sequence VNEQDGGAQPGPVPKSLQKQ. 10 helical membrane passes run 314 to 334, 340 to 360, 402 to 422, 427 to 447, 465 to 485, 496 to 516, 529 to 549, 563 to 583, 589 to 609, and 632 to 652; these read MHWL…FFFI, IDFF…VSMV, NHLE…FSFP, DCIP…TSYM, VAAG…FLKV, GHFI…LFYL, TYCY…SVVI, IGYF…ALMG, RWFL…CGVP, and SSMV…CWFY. Over 653–869 the chain is Lumenal; the sequence is VYRSEGMKVY…HVKIEQDWRS (217 aa). N663 and N748 each carry an N-linked (GlcNAc...) asparagine glycan. The chain crosses the membrane as a helical span at residues 870–890; the sequence is TVHGALKFAFDFFFFPFLSAA.

Interacts with ATP6V1A. As to expression, highly expressed in the developing lens.

It localises to the endoplasmic reticulum membrane. The protein resides in the cytoplasmic vesicle. The protein localises to the secretory vesicle. Its function is as follows. Participates in the regulation of cellular Ca(2+) homeostasis, at least partly, by modulating the filling state of the endoplasmic reticulum Ca(2+) store. Negatively regulates the ER stress response and positively regulates the stability of V-ATPase subunits ATP6V1A and ATP1B1 by preventing their degradation through an unknown proteasome-independent mechanism. The polypeptide is Wolframin (Wfs1) (Mus musculus (Mouse)).